The following is a 164-amino-acid chain: Protein-export protein SecB (164 aa).

This sequence belongs to the SecB family. In terms of assembly, homotetramer, a dimer of dimers. One homotetramer interacts with 1 SecA dimer.

It localises to the cytoplasm. In terms of biological role, one of the proteins required for the normal export of preproteins out of the cell cytoplasm. It is a molecular chaperone that binds to a subset of precursor proteins, maintaining them in a translocation-competent state. It also specifically binds to its receptor SecA. In Rhodopseudomonas palustris (strain BisB18), this protein is Protein-export protein SecB.